The following is a 323-amino-acid chain: L-lactate dehydrogenase 1 (323 aa).

NAD(+)-binding positions include valine 17, aspartate 38, arginine 43, tyrosine 68, and 82–83 (GA). Substrate-binding residues include glutamine 85 and arginine 91. Residues serine 104, 121-123 (AAN), and serine 146 each bind NAD(+). 123–126 (NPVD) lines the substrate pocket. Position 151–154 (151–154 (DTGR)) interacts with substrate. Histidine 178 serves as the catalytic Proton acceptor. Position 223 is a phosphotyrosine (tyrosine 223). Threonine 232 lines the substrate pocket.

This sequence belongs to the LDH/MDH superfamily. LDH family. As to quaternary structure, homotetramer.

It is found in the cytoplasm. It catalyses the reaction (S)-lactate + NAD(+) = pyruvate + NADH + H(+). It participates in fermentation; pyruvate fermentation to lactate; (S)-lactate from pyruvate: step 1/1. Functionally, catalyzes the conversion of lactate to pyruvate. The protein is L-lactate dehydrogenase 1 of Lactobacillus johnsonii (strain CNCM I-12250 / La1 / NCC 533).